Reading from the N-terminus, the 831-residue chain is Probable basic-leucine zipper transcription factor P (831 aa).

Disordered stretches follow at residues 1-33 (MNHR…PSII) and 54-166 (NITS…IASR). The segment covering 54–85 (NITSSPSTSSSPPISTTTTTTTTTTTTATAKK) has biased composition (low complexity). The segment covering 87 to 96 (NSKEKKKTTN) has biased composition (basic and acidic residues). Residues 97-129 (KDNNNNNNNNNSNNQQQQQQQQQQQQQQQQQQQ) show a composition bias toward low complexity. Positions 101-141 (NNNNNNNSNNQQQQQQQQQQQQQQQQQQQYEEEDDDEEDEG) form a coiled coil. Acidic residues predominate over residues 130–143 (YEEEDDDEEDEGGD). Basic and acidic residues predominate over residues 144–154 (DNTKVGKGEKM). Residues 151–214 (GEKMKARRTN…LELLKFSQEV (64 aa)) form the bZIP domain. A basic motif region spans residues 153-173 (KMKARRTNQNIASRNYRQRKK). Residues 176–183 (IKEMEDKI) are leucine-zipper. 2 stretches are compositionally biased toward low complexity: residues 469–484 (SSSS…SSTS) and 497–510 (SSSN…SASS). 4 disordered regions span residues 469-510 (SSSS…SASS), 658-697 (QQQA…HQNY), 715-771 (DATN…NTNK), and 787-810 (SLFS…QNDS). Residues 601–664 (AQQHAQQQAQ…QAAQQQAAQQ (64 aa)) are a coiled coil. 3 stretches are compositionally biased toward low complexity: residues 674–695 (PPQH…QQHQ), 720–750 (NNNN…NNNN), and 787–800 (SLFS…NSQS).

The protein belongs to the bZIP family.

The protein localises to the nucleus. Probable transcriptional regulator. This Dictyostelium discoideum (Social amoeba) protein is Probable basic-leucine zipper transcription factor P (bzpP).